Here is a 152-residue protein sequence, read N- to C-terminus: UPF0266 membrane protein YobD (152 aa).

Transmembrane regions (helical) follow at residues 6 to 26, 45 to 65, and 67 to 87; these read LVLI…QFIM, VDSV…VTSH, and AQMT…IFWI.

This sequence belongs to the UPF0266 family.

Its subcellular location is the cell inner membrane. In Salmonella newport (strain SL254), this protein is UPF0266 membrane protein YobD.